The following is a 103-amino-acid chain: Putative membrane protein insertion efficiency factor (103 aa).

Belongs to the UPF0161 family.

It is found in the cell inner membrane. Could be involved in insertion of integral membrane proteins into the membrane. The sequence is that of Putative membrane protein insertion efficiency factor from Chlamydia felis (strain Fe/C-56) (Chlamydophila felis).